Consider the following 357-residue polypeptide: Ribosomal RNA large subunit methyltransferase M (357 aa).

Residues Ser-183, 216-219, Asp-235, Asp-255, and Asp-271 each bind S-adenosyl-L-methionine; that span reads APGG. Lys-300 (proton acceptor) is an active-site residue.

This sequence belongs to the class I-like SAM-binding methyltransferase superfamily. RNA methyltransferase RlmE family. RlmM subfamily. As to quaternary structure, monomer.

It is found in the cytoplasm. It catalyses the reaction cytidine(2498) in 23S rRNA + S-adenosyl-L-methionine = 2'-O-methylcytidine(2498) in 23S rRNA + S-adenosyl-L-homocysteine + H(+). Functionally, catalyzes the 2'-O-methylation at nucleotide C2498 in 23S rRNA. The chain is Ribosomal RNA large subunit methyltransferase M from Pseudomonas syringae pv. tomato (strain ATCC BAA-871 / DC3000).